Reading from the N-terminus, the 347-residue chain is 8-amino-8-demethylriboflavin N,N-dimethyltransferase (347 aa).

Residues Asp209 and Gly235–Phe237 contribute to the S-adenosyl-L-methionine site.

It belongs to the class I-like SAM-binding methyltransferase superfamily. Cation-independent O-methyltransferase family. As to quaternary structure, homodimer.

The catalysed reaction is 8-amino-8-demethylriboflavin + 2 S-adenosyl-L-methionine = roseoflavin + 2 S-adenosyl-L-homocysteine + 2 H(+). It functions in the pathway antibiotic biosynthesis. Functionally, catalyzes the S-adenosyl methionine-dependent conversion of 8-amino-8-demethyl-D-riboflavin (AF) into 8-methylamino-8-demethyl-D-riboflavin (MAF) and roseoflavin (RoF), the last two steps in the biosynthesis of the antibiotic roseoflavin. The protein is 8-amino-8-demethylriboflavin N,N-dimethyltransferase of Streptomyces davaonensis (strain DSM 101723 / JCM 4913 / KCC S-0913 / 768).